The primary structure comprises 883 residues: Envelope glycoprotein B (883 aa).

The N-terminal stretch at methionine 1–serine 31 is a signal peptide. Over glutamine 32–proline 750 the chain is Virion surface. Cystine bridges form between cysteine 77/cysteine 535, cysteine 94/cysteine 491, cysteine 167/cysteine 229, cysteine 321/cysteine 369, and cysteine 558/cysteine 608. N-linked (GlcNAc...) asparagine; by host glycans are attached at residues asparagine 102 and asparagine 121. Residues threonine 134 to arginine 140 form an involved in fusion and/or binding to host membrane region. Residue asparagine 211 is glycosylated (N-linked (GlcNAc...) asparagine; by host). The interval histidine 216–threonine 223 is involved in fusion and/or binding to host membrane. N-linked (GlcNAc...) asparagine; by host glycosylation is found at asparagine 262 and asparagine 360. Residues glutamine 428–isoleucine 457 are disordered. N-linked (GlcNAc...) asparagine; by host glycans are attached at residues asparagine 579, asparagine 635, and asparagine 649. Hydrophobic membrane proximal region regions lie at residues isoleucine 694 to serine 748 and alanine 724 to alanine 744. A helical membrane pass occupies residues phenylalanine 751 to phenylalanine 771. The Intravirion portion of the chain corresponds to lysine 772 to glutamate 883. The tract at residues proline 791–aspartate 817 is disordered. Over residues aspartate 806–aspartate 817 the composition is skewed to acidic residues. An Internalization motif motif is present at residues tyrosine 868 to leucine 871.

This sequence belongs to the herpesviridae glycoprotein B family. Homotrimer; disulfide-linked. Binds to heparan sulfate proteoglycans. Interacts with gH/gL heterodimer. Post-translationally, a proteolytic cleavage by host furin generates two subunits that remain linked by disulfide bonds.

Its subcellular location is the virion membrane. The protein resides in the host cell membrane. The protein localises to the host endosome membrane. It localises to the host Golgi apparatus membrane. Functionally, envelope glycoprotein that forms spikes at the surface of virion envelope. Essential for the initial attachment to heparan sulfate moieties of the host cell surface proteoglycans. Involved in fusion of viral and cellular membranes leading to virus entry into the host cell. Following initial binding to its host receptors, membrane fusion is mediated by the fusion machinery composed at least of gB and the heterodimer gH/gL. May be involved in the fusion between the virion envelope and the outer nuclear membrane during virion egress. The protein is Envelope glycoprotein B of Infectious laryngotracheitis virus (strain SA-2) (ILTV).